The primary structure comprises 296 residues: Ribose import binding protein RbsB (296 aa).

The signal sequence occupies residues 1–25 (MNMKKLATLVSAVALSATVSANAMA).

The protein belongs to the bacterial solute-binding protein 2 family. In terms of assembly, the complex is composed of an ATP-binding protein (RbsA), two transmembrane proteins (RbsC) and a solute-binding protein (RbsB).

The protein localises to the periplasm. Part of the ABC transporter complex RbsABC involved in ribose import. Binds ribose. This Salmonella typhi protein is Ribose import binding protein RbsB (rbsB).